Consider the following 255-residue polypeptide: Ribonuclease HII (255 aa).

In terms of domain architecture, RNase H type-2 spans asparagine 72–glutamate 255. A divalent metal cation contacts are provided by aspartate 78, glutamate 79, and aspartate 170.

The protein belongs to the RNase HII family. The cofactor is Mn(2+). It depends on Mg(2+) as a cofactor.

Its subcellular location is the cytoplasm. It carries out the reaction Endonucleolytic cleavage to 5'-phosphomonoester.. Its function is as follows. Endonuclease that specifically degrades the RNA of RNA-DNA hybrids. This is Ribonuclease HII from Ruminiclostridium cellulolyticum (strain ATCC 35319 / DSM 5812 / JCM 6584 / H10) (Clostridium cellulolyticum).